The sequence spans 167 residues: NADH-ubiquinone oxidoreductase chain 6 (167 aa).

The next 4 helical transmembrane spans lie at 5–25 (IIMLSKIFMSSLISMILTIYL), 34–54 (MLLIYLISYSIYMSLMMFTMC), 60–80 (LILMILIVFLSGMLIMFSYFI), and 138–158 (FFIMILMLIITLILMTKITYI).

Belongs to the complex I subunit 6 family.

The protein resides in the mitochondrion membrane. It carries out the reaction a ubiquinone + NADH + 5 H(+)(in) = a ubiquinol + NAD(+) + 4 H(+)(out). Its function is as follows. Core subunit of the mitochondrial membrane respiratory chain NADH dehydrogenase (Complex I) that is believed to belong to the minimal assembly required for catalysis. Complex I functions in the transfer of electrons from NADH to the respiratory chain. The immediate electron acceptor for the enzyme is believed to be ubiquinone. The protein is NADH-ubiquinone oxidoreductase chain 6 (ND6) of Apis mellifera ligustica (Common honeybee).